Consider the following 1755-residue polypeptide: Transposon Ty1-GR2 Gag-Pol polyprotein (1755 aa).

The span at 1 to 16 (MESQQLSQHSHISHGS) shows a compositional bias: low complexity. Disordered stretches follow at residues 1–93 (MESQ…MMTQ), 126–173 (PQSQ…RPPP), and 352–421 (GSRN…SKST). 2 stretches are compositionally biased toward polar residues: residues 48–60 (TKAN…TPAS) and 127–152 (QSQF…GNTF). Positions 153-165 (TDSSSADSDMTST) are enriched in low complexity. The interval 299-401 (NNGIHINNKV…NSKSKTARAH (103 aa)) is RNA-binding. The segment covering 402 to 418 (NVSTSNNSPSTDNDSIS) has biased composition (low complexity). S416 bears the Phosphoserine mark. D461 serves as the catalytic For protease activity; shared with dimeric partner. The tract at residues 583-640 (NVHTSESTRKYPYPFIHRMLAHANAQTIRYSLKNNTITYFNESDVDWSSAIDYQCPDC) is integrase-type zinc finger-like. An Integrase catalytic domain is found at 660–835 (NSYEPFQYLH…AGLDISTLLP (176 aa)). Positions 671 and 736 each coordinate Mg(2+). Disordered stretches follow at residues 956–1087 (SKAV…ETEK), 1092–1111 (RSPS…NIVP), and 1130–1187 (DLPL…DNET). Residues 960–969 (SPTDSTPPST) show a composition bias toward low complexity. Polar residues predominate over residues 1005-1015 (STPQISNIEST). Basic and acidic residues predominate over residues 1038 to 1053 (ESSHASKSKDFRHSDS). Polar residues-rich tracts occupy residues 1054-1082 (YSEN…QISD) and 1101-1111 (PENNSSHNIVP). The Bipartite nuclear localization signal signature appears at 1178–1212 (KKRSLEDNETEIKVSRDTWNTKNMRSLEPPRSKKR). One can recognise a Reverse transcriptase Ty1/copia-type domain in the interval 1338 to 1476 (NNYYITQLDI…DILGLEIKYQ (139 aa)). Residues D1346, D1427, D1428, D1610, E1652, and D1685 each contribute to the Mg(2+) site. An RNase H Ty1/copia-type domain is found at 1610–1752 (DASYGNQPYY…IKTFKLLTNK (143 aa)).

In terms of assembly, the capsid protein forms a homotrimer, from which the VLPs are assembled. The protease is a homodimer, whose active site consists of two apposed aspartic acid residues. Initially, virus-like particles (VLPs) are composed of the structural unprocessed proteins Gag and Gag-Pol, and also contain the host initiator methionine tRNA (tRNA(i)-Met) which serves as a primer for minus-strand DNA synthesis, and a dimer of genomic Ty RNA. Processing of the polyproteins occurs within the particle and proceeds by an ordered pathway, called maturation. First, the protease (PR) is released by autocatalytic cleavage of the Gag-Pol polyprotein yielding capsid protein p45 and a Pol-p154 precursor protein. This cleavage is a prerequisite for subsequent processing of Pol-p154 at the remaining sites to release the mature structural and catalytic proteins. Maturation takes place prior to the RT reaction and is required to produce transposition-competent VLPs.

It is found in the cytoplasm. It localises to the nucleus. The catalysed reaction is DNA(n) + a 2'-deoxyribonucleoside 5'-triphosphate = DNA(n+1) + diphosphate. The enzyme catalyses Endonucleolytic cleavage to 5'-phosphomonoester.. In terms of biological role, capsid protein (CA) is the structural component of the virus-like particle (VLP), forming the shell that encapsulates the retrotransposons dimeric RNA genome. The particles are assembled from trimer-clustered units and there are holes in the capsid shells that allow for the diffusion of macromolecules. CA also has nucleocapsid-like chaperone activity, promoting primer tRNA(i)-Met annealing to the multipartite primer-binding site (PBS), dimerization of Ty1 RNA and initiation of reverse transcription. Functionally, the aspartyl protease (PR) mediates the proteolytic cleavages of the Gag and Gag-Pol polyproteins after assembly of the VLP. Its function is as follows. Reverse transcriptase/ribonuclease H (RT) is a multifunctional enzyme that catalyzes the conversion of the retro-elements RNA genome into dsDNA within the VLP. The enzyme displays a DNA polymerase activity that can copy either DNA or RNA templates, and a ribonuclease H (RNase H) activity that cleaves the RNA strand of RNA-DNA heteroduplexes during plus-strand synthesis and hydrolyzes RNA primers. The conversion leads to a linear dsDNA copy of the retrotransposon that includes long terminal repeats (LTRs) at both ends. Integrase (IN) targets the VLP to the nucleus, where a subparticle preintegration complex (PIC) containing at least integrase and the newly synthesized dsDNA copy of the retrotransposon must transit the nuclear membrane. Once in the nucleus, integrase performs the integration of the dsDNA into the host genome. The protein is Transposon Ty1-GR2 Gag-Pol polyprotein (TY1B-GR2) of Saccharomyces cerevisiae (strain ATCC 204508 / S288c) (Baker's yeast).